We begin with the raw amino-acid sequence, 123 residues long: ATP synthase epsilon chain (123 aa).

It belongs to the ATPase epsilon chain family. As to quaternary structure, F-type ATPases have 2 components, CF(1) - the catalytic core - and CF(0) - the membrane proton channel. CF(1) has five subunits: alpha(3), beta(3), gamma(1), delta(1), epsilon(1). CF(0) has three main subunits: a, b and c.

It is found in the cell inner membrane. Functionally, produces ATP from ADP in the presence of a proton gradient across the membrane. The protein is ATP synthase epsilon chain of Helicobacter pylori (strain G27).